Here is a 226-residue protein sequence, read N- to C-terminus: Large ribosomal subunit protein uL1 (226 aa).

This sequence belongs to the universal ribosomal protein uL1 family. As to quaternary structure, part of the 50S ribosomal subunit.

Its function is as follows. Binds directly to 23S rRNA. The L1 stalk is quite mobile in the ribosome, and is involved in E site tRNA release. Functionally, protein L1 is also a translational repressor protein, it controls the translation of the L11 operon by binding to its mRNA. The protein is Large ribosomal subunit protein uL1 of Borreliella burgdorferi (strain ATCC 35210 / DSM 4680 / CIP 102532 / B31) (Borrelia burgdorferi).